A 156-amino-acid polypeptide reads, in one-letter code: Small ribosomal subunit protein uS7 (156 aa).

The protein belongs to the universal ribosomal protein uS7 family. Part of the 30S ribosomal subunit. Contacts proteins S9 and S11.

Its function is as follows. One of the primary rRNA binding proteins, it binds directly to 16S rRNA where it nucleates assembly of the head domain of the 30S subunit. Is located at the subunit interface close to the decoding center, probably blocks exit of the E-site tRNA. The polypeptide is Small ribosomal subunit protein uS7 (Pseudomonas fluorescens (strain SBW25)).